A 397-amino-acid polypeptide reads, in one-letter code: MTTLLNPYFGEFGGMYVPQILMPALRQLEEAFVSAQKDPAFQAEFTDLLKNYAGRPTALTKCRNLTEGTKTTLYLKREDLLHGGAHKTNQVLGQALLAKRMGKTEIIAETGAGQHGVASALACALLGLKCRIYMGAKDIERQSPNVFRMRLMGADVIPVHSGSATLKDACNEALRDWSGSYDTAHYMLGTAAGPHPFPTIVREFQRMIGEETKAQILEKEGRLPDAVIACVGGGSNAIGMFADFIDDTSVGLIGVEPAGHGIESGEHGAPLKHGRVGIYFGMKSPMMQTDEGQIEESYSISAGLDFPSVGPQHAHLNSIGRAEYVSITDDEALEAFKTLCRNEGIIPALESSHALAYALKMIKEDPEKEQLLVVNLSGRGDKDIFTVHDILKARGEI.

Lys-87 carries the N6-(pyridoxal phosphate)lysine modification.

It belongs to the TrpB family. Tetramer of two alpha and two beta chains. Pyridoxal 5'-phosphate serves as cofactor.

It catalyses the reaction (1S,2R)-1-C-(indol-3-yl)glycerol 3-phosphate + L-serine = D-glyceraldehyde 3-phosphate + L-tryptophan + H2O. The protein operates within amino-acid biosynthesis; L-tryptophan biosynthesis; L-tryptophan from chorismate: step 5/5. Functionally, the beta subunit is responsible for the synthesis of L-tryptophan from indole and L-serine. This Enterobacter sp. (strain 638) protein is Tryptophan synthase beta chain.